The chain runs to 443 residues: Monooxygenase asqM (443 aa).

This sequence belongs to the aromatic-ring hydroxylase family. Requires FAD as cofactor.

Its pathway is secondary metabolite biosynthesis. It functions in the pathway alkaloid biosynthesis. The protein operates within mycotoxin biosynthesis. Its function is as follows. Monooxygenase; part of the gene cluster that mediates the biosynthesis of the aspoquinolone mycotoxins. The role of asqM within the aspoquinolone pathway has still to be determined. The first step of the pathway is catalyzed by the nonribosomal peptide synthetase asqK that condenses anthranilic acid and O-methyl-L-tyrosine to produce 4'-methoxycyclopeptin. 4'-methoxycyclopeptin is then converted to 4'-methoxydehydrocyclopeptin by the ketoglutarate-dependent dioxygenase asqJ. AsqJ also converts its first product 4'-methoxydehydrocyclopeptin to 4'-methoxycyclopenin. The following conversion of 4'-methoxycyclopenin into 4'-methoxyviridicatin is catalyzed by the cyclopenase asqI. 4'-methoxyviridicatin is the precursor of quinolone natural products, and is further converted to quinolinone B. The prenyltransferase asqH1 then catalyzes the canonical Friedel-Crafts alkylation of quinolinone B with dimethylallyl cation to yield dimethylallyl quinolone, which is subjected to FAD-dependent dehydrogenation by the FAD-linked oxidoreductase asqF to yield conjugated aryl diene. The delta(3') double bond then serves as the site of the second alkylation with DMAPP catalyzed by the prenyltransferase asqH2 to yield a carbenium ion intermediate, which can be attacked by H(2)O to yield a styrenyl quinolone containing a C3'-hydroxyprenyl chain. The FAD-dependent monooxygenase asqG performs epoxidation of the terminal C7'-C8' olefin. Finally, after dehydratation of the epoxide at C3 by asqC, the quinolone epoxide rearrangement protein asqO catalyzes an enzymatic 3-exo-tet cyclization to yield the cyclopropyl-THF ring system in aspoquinolone. This Emericella nidulans (strain FGSC A4 / ATCC 38163 / CBS 112.46 / NRRL 194 / M139) (Aspergillus nidulans) protein is Monooxygenase asqM.